Consider the following 133-residue polypeptide: Transmembrane protein 60 (133 aa).

4 helical membrane passes run 5–25, 35–55, 78–98, and 110–130; these read LAQR…MLVL, WFLI…MLIV, AWYL…CAKL, and FIPL…NVFF.

The protein resides in the membrane. The sequence is that of Transmembrane protein 60 (Tmem60) from Mus musculus (Mouse).